Reading from the N-terminus, the 699-residue chain is Cyclic AMP-dependent transcription factor ATF-6 beta (699 aa).

The residue at position 2 (Ala-2) is an N-acetylalanine. The Cytoplasmic segment spans residues Ala-2 to Lys-393. Disordered regions lie at residues Ser-59–Gly-114, Val-218–Val-246, and Glu-290–Ser-313. Pro residues predominate over residues Pro-68–Ile-78. Residues Ser-86–Pro-109 are compositionally biased toward low complexity. Residues Leu-322 to Leu-385 enclose the bZIP domain. Residues Lys-324–Lys-344 are basic motif. The interval Leu-347–Leu-354 is leucine-zipper. A helical; Signal-anchor for type II membrane protein membrane pass occupies residues Val-394–Ser-414. Residues Glu-415 to Pro-699 lie on the Lumenal side of the membrane. A disordered region spans residues Pro-417–Leu-474. Over residues Pro-458–Gly-467 the composition is skewed to polar residues. Asn-473 and Asn-502 each carry an N-linked (GlcNAc...) asparagine glycan. Over residues Arg-519 to His-529 the composition is skewed to basic residues. Positions Arg-519 to Gly-563 are disordered. Residues Pro-545 to Pro-556 show a composition bias toward pro residues. N-linked (GlcNAc...) asparagine glycosylation is found at Asn-607, Asn-624, and Asn-673. Residues Ser-657–Pro-699 are disordered. The span at Pro-680 to Pro-693 shows a compositional bias: low complexity.

The protein belongs to the bZIP family. ATF subfamily. In terms of assembly, homodimer and heterodimer with ATF6-alpha. The dimer interacts with the nuclear transcription factor Y (NF-Y) trimer through direct binding to NF-Y subunit C (NF-YC). Post-translationally, N-glycosylated. During unfolded protein response, a fragment of approximately 60 kDa containing the cytoplasmic transcription factor domain is released by proteolysis. The cleavage is probably performed sequentially by site-1 (MBTPS1, S1P) and site-2 (MBTPS2, S2P) proteases.

The protein localises to the endoplasmic reticulum membrane. Its subcellular location is the nucleus. Precursor of the transcription factor form (Processed cyclic AMP-dependent transcription factor ATF-6 beta), which is embedded in the endoplasmic reticulum membrane. Endoplasmic reticulum stress promotes processing of this form, releasing the transcription factor form that translocates into the nucleus, where it activates transcription of genes involved in the unfolded protein response (UPR). Functionally, transcription factor that acts in the unfolded protein response (UPR) pathway by activating UPR target genes induced during ER stress. Binds DNA on the 5'-CCAC[GA]-3' half of the ER stress response element (ERSE) (5'-CCAATN(9)CCAC[GA]-3') when NF-Y is bound to ERSE. The sequence is that of Cyclic AMP-dependent transcription factor ATF-6 beta (Atf6b) from Mus musculus (Mouse).